Reading from the N-terminus, the 693-residue chain is MDLLPKSSKEFAAPEYWEQFFRRRGERAFEWYGGYLELCGLLHKYIKPRDKVFVVGCGNSELSEQLYDAGCQNLTNIDVSEVVIRQMNERNSNRRPNMTFQVMDATQTTFDDSCFQAVLDKGTLDAIMTDTDKGTLETADKLMSEIGRVLTCGGRFLCVSLAQAHVLEKLVRHFSQGGWMVRVHQVMQGSTSETGSQFPMPVFVFVMTKVRQISGFPTVLEMMPDEEGGKPVRWGSPEEFMEAVKERQRYALIRNRLNQNQSSQEVSLDLCDGDSRKSRYTFYIVDSPAVRLSHSNHFAIFIIPHGRETEWLFGSEQGRKQLAGSVGFNRLIIVALHRDQQYTDMKAIQSELSAKVLELAPPGLPDNQQIPFLSAGEDIGSRTIQHRGKSEFSGEYVVEDVRGDGNSSYRRLIFLSNQNVVQSEARLLPISTHIGQKKRKDKKKQQKPVKDLEQPTITRIDKSYLCCEHHKAMISGLALLPNPGLLPECQASVLVIGLGGGSLSLFIHDYFPGSRVEVVEIDPSVLDVASNWFNFCQDERMKVHLADGLVHINSLADNGEACYDVIMFDVDSKDPSVGMSCPPPAFVEKMFLQNVHNILNANGVFILNLVCRDTDLRLKVLNVLHEVFPLIYAQKIDEEVNEILFCRPNSERKFSSLELKESAKNLEKKLRKPGVQWDSTYSLAEMLKSVQIV.

The protein belongs to the methyltransferase superfamily.

It catalyses the reaction L-lysyl-[protein] + S-adenosyl-L-methionine = N(6)-methyl-L-lysyl-[protein] + S-adenosyl-L-homocysteine + H(+). It carries out the reaction N(6)-methyl-L-lysyl-[protein] + S-adenosyl-L-methionine = N(6),N(6)-dimethyl-L-lysyl-[protein] + S-adenosyl-L-homocysteine + H(+). The enzyme catalyses N-terminal glycyl-L-lysyl-L-glutamyl-[protein] + 3 S-adenosyl-L-methionine = N-terminal N,N,N-trimethyl-glycyl-L-lysyl-L-glutamyl-[protein] + 3 S-adenosyl-L-homocysteine + 3 H(+). Functionally, dual methyltransferase that catalyzes methylation of elongation factor 1-alpha (eef1a1 and eef1a2) at two different positions, and is therefore involved in the regulation of mRNA translation. Via its C-terminus, methylates the N-terminus of eef1a1 and eef1a2. Via its N-terminus dimethylates lysine residues of eef1a1 and eef1a2. The polypeptide is eEF1A lysine and N-terminal methyltransferase (mettl13) (Xenopus laevis (African clawed frog)).